Reading from the N-terminus, the 1350-residue chain is Zinc finger protein Xfin (1350 aa).

A KRAB domain is found at 1–58 (MEEPKCLQREMYKSVMTENYQCVLSLGYPIRKPEIVSMMEVGEELWSKNDSARPGQKE). The segment at 47–68 (SKNDSARPGQKEVEGETPKESD) is disordered. C2H2-type zinc fingers lie at residues 108–130 (HICS…QRMH), 136–158 (HHCP…QRTH), 164–186 (YQCV…QRTH), 192–214 (YTCL…RRTH), 220–242 (YRCS…LRTH), 248–270 (YECP…KRTH), 276–298 (FRCS…MRKH), 326–348 (YSCS…QQTH), 354–376 (YLCS…FRTH), 382–404 (YQCA…LRTH), 410–432 (FKCS…QRTH), 438–460 (YKCS…QRIH), 466–488 (YKCT…QKVH), 503–525 (HKCS…SKLH), 531–553 (FQCA…IRVH), 559–581 (FKCL…WRIH), 587–609 (FPCY…HRTH), 615–637 (HKCS…SRTH), 643–665 (YPCT…QRIH), 671–693 (YHCT…RRTH), 699–721 (YRCP…LVVH), 750–772 (YPCT…LRTH), 778–800 (YPCN…LRTH), 806–828 (YHCP…QRTH), 834–856 (YTCS…MRTH), 862–884 (YKCE…QRIH), 890–912 (YHCP…QRIH), 918–940 (YPCG…LKCH), 988–1010 (FKCN…VRIH), 1016–1038 (YKCS…YRTH), 1044–1066 (YKCG…QRVH), 1136–1158 (YSCS…WRMH), 1164–1186 (YTCK…VRIH), 1192–1214 (YPCS…QRIH), 1220–1242 (YTCT…SRTH), 1248–1270 (YKCN…MRTH), and 1276–1298 (YGCN…QRMC).

Belongs to the krueppel C2H2-type zinc-finger protein family. Post-translationally, phosphorylated. Phosphorylation enhances RNA binding. Expressed in oocytes, and in specialized cell types such as neural retina cones in adults.

The protein localises to the cytoplasm. In terms of biological role, binds to poly-G sequences in RNA. May function in post-translational regulation processes. The polypeptide is Zinc finger protein Xfin (Xenopus laevis (African clawed frog)).